Consider the following 443-residue polypeptide: Xaa-Pro dipeptidase (443 aa).

The Mn(2+) site is built by Asp246, Asp257, His339, Glu384, and Glu423.

The protein belongs to the peptidase M24B family. Bacterial-type prolidase subfamily. Mn(2+) serves as cofactor.

It carries out the reaction Xaa-L-Pro dipeptide + H2O = an L-alpha-amino acid + L-proline. In terms of biological role, splits dipeptides with a prolyl residue in the C-terminal position. The chain is Xaa-Pro dipeptidase from Escherichia coli (strain 55989 / EAEC).